The primary structure comprises 88 residues: FXYD domain-containing ion transport regulator 3 (88 aa).

The segment at residues 1-20 (MQEVVLSLLVLLAGLPTLDA) is a signal peptide (not cleaved). Topologically, residues 1–38 (MQEVVLSLLVLLAGLPTLDANDPENKNDPFYYDWYSLR) are extracellular. A helical membrane pass occupies residues 39–59 (VGGLICAGILCALGIIVLMSG). Topologically, residues 60–88 (KCKCKFRQKPSHRPGEGPPLITPGSAHNC) are cytoplasmic. The tract at residues 67 to 88 (QKPSHRPGEGPPLITPGSAHNC) is disordered.

The protein belongs to the FXYD family. In terms of assembly, regulatory subunit of the sodium/potassium-transporting ATPase which is composed of a catalytic alpha subunit, a non-catalytic beta subunit and an additional regulatory subunit. Interacts with catalytic alpha subunit ATP1A1. Also interacts with non-catalytic beta subunit ATP1B1. Interacts with the ATP1A1-ATP1B1, ATP1A2-ATP1B1 and ATP1A3-ATP1B1 NKA isozymes. Glutathionylated. As to expression, expressed at high levels in heart, skeletal muscle and liver with low levels of expression in breast, brain, lung, stomach and colon. In the gastric gland, mainly expressed in the mucus cells forming the upper part of the gland and is absent from the parietal cells.

The protein localises to the cell membrane. Its function is as follows. Associates with and regulates the activity of the sodium/potassium-transporting ATPase (NKA) which transports Na(+) out of the cell and K(+) into the cell. Reduces glutathionylation of the NKA beta-1 subunit ATP1B1, thus reversing glutathionylation-mediated inhibition of ATP1B1. Induces a hyperpolarization-activated chloride current when expressed in Xenopus oocytes. The protein is FXYD domain-containing ion transport regulator 3 (Fxyd3) of Mus musculus (Mouse).